The primary structure comprises 417 residues: Serine hydroxymethyltransferase (417 aa).

Residues leucine 121 and 125–127 each bind (6S)-5,6,7,8-tetrahydrofolate; that span reads GHL. Lysine 229 is subject to N6-(pyridoxal phosphate)lysine. A (6S)-5,6,7,8-tetrahydrofolate-binding site is contributed by 355-357; the sequence is SPF.

Belongs to the SHMT family. As to quaternary structure, homodimer. The cofactor is pyridoxal 5'-phosphate.

The protein resides in the cytoplasm. It catalyses the reaction (6R)-5,10-methylene-5,6,7,8-tetrahydrofolate + glycine + H2O = (6S)-5,6,7,8-tetrahydrofolate + L-serine. Its pathway is one-carbon metabolism; tetrahydrofolate interconversion. It functions in the pathway amino-acid biosynthesis; glycine biosynthesis; glycine from L-serine: step 1/1. Functionally, catalyzes the reversible interconversion of serine and glycine with tetrahydrofolate (THF) serving as the one-carbon carrier. This reaction serves as the major source of one-carbon groups required for the biosynthesis of purines, thymidylate, methionine, and other important biomolecules. Also exhibits THF-independent aldolase activity toward beta-hydroxyamino acids, producing glycine and aldehydes, via a retro-aldol mechanism. The chain is Serine hydroxymethyltransferase from Shewanella sp. (strain ANA-3).